Consider the following 267-residue polypeptide: Phosphate import ATP-binding protein PstB 2 (267 aa).

Residues 21–262 enclose the ABC transporter domain; that stretch reads LSTKDLHVYY…AKLQSTSDYV (242 aa). Residue 53–60 coordinates ATP; that stretch reads GPSGCGKS.

It belongs to the ABC transporter superfamily. Phosphate importer (TC 3.A.1.7) family. As to quaternary structure, the complex is composed of two ATP-binding proteins (PstB), two transmembrane proteins (PstC and PstA) and a solute-binding protein (PstS).

The protein localises to the cell membrane. It carries out the reaction phosphate(out) + ATP + H2O = ADP + 2 phosphate(in) + H(+). In terms of biological role, part of the ABC transporter complex PstSACB involved in phosphate import. Responsible for energy coupling to the transport system. This is Phosphate import ATP-binding protein PstB 2 from Streptococcus mutans serotype c (strain ATCC 700610 / UA159).